A 1249-amino-acid polypeptide reads, in one-letter code: ATP-dependent helicase/nuclease subunit A (1249 aa).

In terms of domain architecture, UvrD-like helicase ATP-binding spans 5-482 (TNYTPSQQAV…IVLAENFRSV (478 aa)). 26–33 (ASAGSGKT) provides a ligand contact to ATP. The UvrD-like helicase C-terminal domain maps to 521–811 (ADMPQTTNLL…NVMTIHGSKG (291 aa)).

The protein belongs to the helicase family. AddA subfamily. Heterodimer of AddA and AddB/RexB. Mg(2+) serves as cofactor.

The enzyme catalyses Couples ATP hydrolysis with the unwinding of duplex DNA by translocating in the 3'-5' direction.. It catalyses the reaction ATP + H2O = ADP + phosphate + H(+). In terms of biological role, the heterodimer acts as both an ATP-dependent DNA helicase and an ATP-dependent, dual-direction single-stranded exonuclease. Recognizes the chi site generating a DNA molecule suitable for the initiation of homologous recombination. The AddA nuclease domain is required for chi fragment generation; this subunit has the helicase and 3' -&gt; 5' nuclease activities. In Lactiplantibacillus plantarum (strain ATCC BAA-793 / NCIMB 8826 / WCFS1) (Lactobacillus plantarum), this protein is ATP-dependent helicase/nuclease subunit A.